Reading from the N-terminus, the 257-residue chain is Thiazole synthase (257 aa).

The Schiff-base intermediate with DXP role is filled by Lys-97. 1-deoxy-D-xylulose 5-phosphate is bound by residues Gly-158, 184–185 (AG), and 206–207 (NT).

Belongs to the ThiG family. Homotetramer. Forms heterodimers with either ThiH or ThiS.

It is found in the cytoplasm. The enzyme catalyses [ThiS sulfur-carrier protein]-C-terminal-Gly-aminoethanethioate + 2-iminoacetate + 1-deoxy-D-xylulose 5-phosphate = [ThiS sulfur-carrier protein]-C-terminal Gly-Gly + 2-[(2R,5Z)-2-carboxy-4-methylthiazol-5(2H)-ylidene]ethyl phosphate + 2 H2O + H(+). Its pathway is cofactor biosynthesis; thiamine diphosphate biosynthesis. Functionally, catalyzes the rearrangement of 1-deoxy-D-xylulose 5-phosphate (DXP) to produce the thiazole phosphate moiety of thiamine. Sulfur is provided by the thiocarboxylate moiety of the carrier protein ThiS. In vitro, sulfur can be provided by H(2)S. This Desulforamulus reducens (strain ATCC BAA-1160 / DSM 100696 / MI-1) (Desulfotomaculum reducens) protein is Thiazole synthase.